The primary structure comprises 181 residues: Large ribosomal subunit protein uL6 (181 aa).

Belongs to the universal ribosomal protein uL6 family. Part of the 50S ribosomal subunit.

This protein binds to the 23S rRNA, and is important in its secondary structure. It is located near the subunit interface in the base of the L7/L12 stalk, and near the tRNA binding site of the peptidyltransferase center. This chain is Large ribosomal subunit protein uL6, found in Coprothermobacter proteolyticus (strain ATCC 35245 / DSM 5265 / OCM 4 / BT).